We begin with the raw amino-acid sequence, 106 residues long: Urease subunit beta (106 aa).

It belongs to the urease beta subunit family. As to quaternary structure, heterotrimer of UreA (gamma), UreB (beta) and UreC (alpha) subunits. Three heterotrimers associate to form the active enzyme.

The protein resides in the cytoplasm. The enzyme catalyses urea + 2 H2O + H(+) = hydrogencarbonate + 2 NH4(+). It functions in the pathway nitrogen metabolism; urea degradation; CO(2) and NH(3) from urea (urease route): step 1/1. This chain is Urease subunit beta, found in Citrobacter koseri (strain ATCC BAA-895 / CDC 4225-83 / SGSC4696).